The sequence spans 1788 residues: Protein Shroom3 (1788 aa).

Disordered regions lie at residues 1–25, 146–174, 225–263, 321–367, 382–401, 469–488, 498–548, 727–768, 793–821, 876–915, 1011–1067, 1086–1133, 1171–1263, 1303–1324, 1404–1467, and 1507–1538; these read MMQV…STSD, EVNS…HGRL, KAAG…ESSP, GAKS…KQEG, PDIS…PLRL, NIAS…QADH, TVHA…GNKL, EISP…VTPT, TAEQ…APLT, TGRR…SMNS, SRRH…SASN, SFKN…PETK, KRGK…SEAE, DTES…PPSL, VPAP…AKSQ, and ALKE…KRET. Composition is skewed to polar residues over residues 147–161 and 230–240; these read VNSS…SRQP and HSTNTSSNAAQ. 2 stretches are compositionally biased toward basic and acidic residues: residues 245-259 and 357-366; these read VHGD…ERSP and SVKEREKKQE. Basic and acidic residues predominate over residues 476–488; it reads NKMDERSNRQADH. Residues 708-811 form the ASD1 domain; it reads VKDAQCKVLE…SEPEKMNEVG (104 aa). Residues 793 to 808 show a composition bias toward basic and acidic residues; that stretch reads TAEQKKRSYSEPEKMN. Positions 893-903 are enriched in polar residues; sequence QSTYFSGSIMD. The span at 904–915 shows a compositional bias: low complexity; the sequence is NQSMTSTSSMNS. 3 stretches are compositionally biased toward polar residues: residues 1055–1067, 1100–1124, and 1211–1263; these read EVGN…SASN, ENSS…SISG, and TSAQ…SEAE. Residues 1313–1323 show a composition bias toward pro residues; it reads PPSPPPFPPPS. The segment covering 1433–1451 has biased composition (polar residues); the sequence is SILQSSEGNFNPSDSQSTL. An ASD2 domain is found at 1467-1756; sequence QELAKEIVTK…QLRCLTESLP (290 aa). Over residues 1529-1538 the composition is skewed to basic and acidic residues; that stretch reads SEXKEEKRET. Positions 1653 to 1708 form a coiled coil; it reads RLARVENALSSLGEDASAEERKTWNEKKKQLCGQHEDARELKENLDRREKLVMDFL.

Belongs to the shroom family. Interacts with F-actin. Interacts with ROCK1. In terms of tissue distribution, expressed in epithelial cells of the cement gland.

It is found in the cell junction. Its subcellular location is the adherens junction. It localises to the cytoplasm. The protein resides in the cytoskeleton. The protein localises to the apical cell membrane. In terms of biological role, controls cell shape changes in the neuroepithelium during neural tube closure. Induces apical constriction in epithelial cells by promoting the apical accumulation of F-actin and myosin II, and probably by bundling stress fibers. Induces apicobasal cell elongation by redistributing gamma-tubulin and directing the assembly of robust apicobasal microtubule arrays. The protein is Protein Shroom3 (shroom3) of Xenopus laevis (African clawed frog).